Here is a 469-residue protein sequence, read N- to C-terminus: Protein YfjI (469 aa).

The protein is Protein YfjI (yfjI) of Escherichia coli (strain K12).